A 398-amino-acid chain; its full sequence is Phosphoglycerate kinase (398 aa).

Substrate-binding positions include 21 to 23, arginine 36, 59 to 62, arginine 119, and arginine 157; these read DFN and HLGR. Residues lysine 208, glycine 296, glutamate 327, and 354-357 each bind ATP; that span reads GGDS.

Belongs to the phosphoglycerate kinase family. In terms of assembly, monomer.

The protein resides in the cytoplasm. It carries out the reaction (2R)-3-phosphoglycerate + ATP = (2R)-3-phospho-glyceroyl phosphate + ADP. It participates in carbohydrate degradation; glycolysis; pyruvate from D-glyceraldehyde 3-phosphate: step 2/5. The polypeptide is Phosphoglycerate kinase (Streptococcus pyogenes serotype M18 (strain MGAS8232)).